Consider the following 579-residue polypeptide: MSETSSSRRSASKDAVKSYFAGKYNKVLDSILEAEAAISKSPTVAEDLSGSSSSGNSEMSHPSLTASSATSQGISKKELLQQIAGSLFSTSIERLKTAHSSEVSSTPEYSVNDSYGEQECRECDGVFKCSAHFEGAPEYYDDETESGPALEPMTSNSEKDPFIDVFLDKLISRLVPEKLPEREHFSSKTTIEHDLDTGRVPVFSATTLGSNFKKLSKKMGSIFELQDSIVRLLTWRNPTGTVTSLILFTLICFNPMYLVILPIFRFVYGIVVPGYVRKHPLQRSIYPLKRNHGSSLLYDVCYEGKNEYSYGQQFFSKSFMDTLESRNQEIDEISELDKRTENTGELKQGMKVLINLRDMQNMTSGTLHVIEAINSFLRKSSSFQNEECSTKRFFTGFLLIVFLKILSPFVNWSYVCSIFAWCLLIYMHPRAHPKIISFFKTGTMGKEYKNLKKREHQALNMIFDEQPETKFIEIFEIYKKALLPNDWKFFRYSNRIFDPQDPYRRAQQFPPGVDSLADVIPPTGWSFDPNFEWKIDNDVDRWVVERGLNLPITGEFLFDPMFKRRRLIHRVIKNATPVA.

Topologically, residues 1 to 243 (MSETSSSRRS…TWRNPTGTVT (243 aa)) are cytoplasmic. A disordered region spans residues 40 to 70 (KSPTVAEDLSGSSSSGNSEMSHPSLTASSAT). A compositionally biased stretch (low complexity) spans 49 to 63 (SGSSSSGNSEMSHPS). The helical transmembrane segment at 244–264 (SLILFTLICFNPMYLVILPIF) threads the bilayer. Topologically, residues 265–392 (RFVYGIVVPG…FQNEECSTKR (128 aa)) are peroxisomal. Asn-361 is a glycosylation site (N-linked (GlcNAc...) asparagine). A helical transmembrane segment spans residues 393-413 (FFTGFLLIVFLKILSPFVNWS). Over 414–579 (YVCSIFAWCL…RVIKNATPVA (166 aa)) the chain is Cytoplasmic.

The protein belongs to the PEX28-32 family. Peroxin-28 subfamily.

It is found in the peroxisome membrane. Its function is as follows. Involved in the regulation of peroxisome number, size and distribution. This is Peroxisomal membrane protein PEX28 (PEX28) from Saccharomyces cerevisiae (strain ATCC 204508 / S288c) (Baker's yeast).